Here is a 103-residue protein sequence, read N- to C-terminus: Pilin (103 aa).

A signal peptide spans 1 to 30; it reads MYRFACRTLMLAACILATGVAGLGVGAQSA. Residues 61–76 are compositionally biased toward basic and acidic residues; it reads HDDFHRDSDGPDHSRD. Residues 61-103 are disordered; it reads HDDFHRDSDGPDHSRDYPGPILEGPVLDDPGAAPPPPAAGGGA. Pro residues predominate over residues 92–103; the sequence is AAPPPPAAGGGA.

This sequence belongs to the mycobacterial pilin family. In terms of assembly, forms a homomer composed of subunits assembled in a large structure.

It is found in the fimbrium. Structural subunit of pili, which are thin, flexible, coiled-coil, aggregative fibers. Mediates adhesion to the extracellular matrix, an event that would facilitate direct interaction with the host epithelium during infection in the lung or other tissues. This chain is Pilin (mtp), found in Mycobacterium bovis (strain ATCC BAA-935 / AF2122/97).